Reading from the N-terminus, the 734-residue chain is Photosystem I P700 chlorophyll a apoprotein A2 (734 aa).

8 consecutive transmembrane segments (helical) span residues 46-69 (IFAS…FHVA), 135-158 (LYTG…LHLQ), 175-199 (LNHH…HVAI), 273-291 (IAHH…GHMY), 330-353 (IHFQ…QHMY), 369-395 (AALY…IFFI), 417-439 (AIIS…LYVH), and 517-535 (FLVH…LILV). [4Fe-4S] cluster-binding residues include cysteine 559 and cysteine 568. Transmembrane regions (helical) follow at residues 575-596 (AFYL…YWHW) and 643-665 (LSVW…MFLI). Histidine 654, methionine 662, and tyrosine 670 together coordinate chlorophyll a. Residue tryptophan 671 coordinates phylloquinone. A helical transmembrane segment spans residues 707–727 (LVGLAHFSVGYIFTYAAFLIA).

This sequence belongs to the PsaA/PsaB family. The PsaA/B heterodimer binds the P700 chlorophyll special pair and subsequent electron acceptors. PSI consists of a core antenna complex that captures photons, and an electron transfer chain that converts photonic excitation into a charge separation. The eukaryotic PSI reaction center is composed of at least 11 subunits. It depends on P700 is a chlorophyll a/chlorophyll a' dimer, A0 is one or more chlorophyll a, A1 is one or both phylloquinones and FX is a shared 4Fe-4S iron-sulfur center. as a cofactor.

The protein localises to the plastid. It is found in the chloroplast thylakoid membrane. It catalyses the reaction reduced [plastocyanin] + hnu + oxidized [2Fe-2S]-[ferredoxin] = oxidized [plastocyanin] + reduced [2Fe-2S]-[ferredoxin]. Functionally, psaA and PsaB bind P700, the primary electron donor of photosystem I (PSI), as well as the electron acceptors A0, A1 and FX. PSI is a plastocyanin-ferredoxin oxidoreductase, converting photonic excitation into a charge separation, which transfers an electron from the donor P700 chlorophyll pair to the spectroscopically characterized acceptors A0, A1, FX, FA and FB in turn. Oxidized P700 is reduced on the lumenal side of the thylakoid membrane by plastocyanin. This Calycanthus floridus var. glaucus (Eastern sweetshrub) protein is Photosystem I P700 chlorophyll a apoprotein A2.